Here is a 195-residue protein sequence, read N- to C-terminus: Interferon tau-11 (195 aa).

The first 23 residues, 1–23, serve as a signal peptide directing secretion; it reads MAFVLSLLMALVLVSYGPGGSLG. Cystine bridges form between Cys-24–Cys-122 and Cys-52–Cys-162. A glycan (N-linked (GlcNAc...) asparagine) is linked at Asn-101.

Belongs to the alpha/beta interferon family. IFN-alphaII subfamily. As to expression, constitutively and exclusively expressed in the mononuclear cells of the extraembryonic trophectoderm.

It localises to the secreted. Functionally, paracrine hormone primarily responsible for maternal recognition of pregnancy. Interacts with endometrial receptors, probably type I interferon receptors, and blocks estrogen receptor expression, preventing the estrogen-induced increase in oxytocin receptor expression in the endometrium. This results in the suppression of the pulsatile endometrial release of the luteolytic hormone prostaglandin F2-alpha, hindering the regression of the corpus luteum (luteolysis) and therefore a return to ovarian cyclicity. This, and a possible direct effect of IFN-tau on prostaglandin synthesis, leads in turn to continued ovarian progesterone secretion, which stimulates the secretion by the endometrium of the nutrients required for the growth of the conceptus. In summary, displays particularly high antiviral and antiproliferative potency concurrently with particular weak cytotoxicity, high antiluteolytic activity and immunomodulatory properties. In contrast with other IFNs, IFN-tau is not virally inducible. The sequence is that of Interferon tau-11 (IFNT11) from Ovis aries (Sheep).